Reading from the N-terminus, the 108-residue chain is UPF0060 membrane protein CC_1976 (108 aa).

4 consecutive transmembrane segments (helical) span residues 4 to 24, 27 to 47, 59 to 79, and 85 to 105; these read FAIYVLAALAEIAGCFGFWAW, LGKSPAWAVLGVLSLVIFALL, AFAAYGGVYIIASLAWMQVVE, and RWDLIGGVICLAGAALILFGP.

It belongs to the UPF0060 family.

It localises to the cell inner membrane. The polypeptide is UPF0060 membrane protein CC_1976 (Caulobacter vibrioides (strain ATCC 19089 / CIP 103742 / CB 15) (Caulobacter crescentus)).